The sequence spans 206 residues: Ribosomal RNA small subunit methyltransferase G (206 aa).

S-adenosyl-L-methionine contacts are provided by residues Gly-73, Leu-78, 124 to 125 (VE), and Arg-139.

The protein belongs to the methyltransferase superfamily. RNA methyltransferase RsmG family.

Its subcellular location is the cytoplasm. It carries out the reaction guanosine(527) in 16S rRNA + S-adenosyl-L-methionine = N(7)-methylguanosine(527) in 16S rRNA + S-adenosyl-L-homocysteine. Specifically methylates the N7 position of guanine in position 527 of 16S rRNA. In Edwardsiella ictaluri (strain 93-146), this protein is Ribosomal RNA small subunit methyltransferase G.